The primary structure comprises 404 residues: Putative glutamate--cysteine ligase 2 (404 aa).

The disordered stretch occupies residues 377-404 (GPAGKRAHEGGRSFRPAAGAPMSIRGQE).

This sequence belongs to the glutamate--cysteine ligase type 2 family. YbdK subfamily.

The enzyme catalyses L-cysteine + L-glutamate + ATP = gamma-L-glutamyl-L-cysteine + ADP + phosphate + H(+). Its function is as follows. ATP-dependent carboxylate-amine ligase which exhibits weak glutamate--cysteine ligase activity. This is Putative glutamate--cysteine ligase 2 from Pseudomonas aeruginosa (strain UCBPP-PA14).